The sequence spans 283 residues: Tropomyosin (283 aa).

Residues Met-1–Leu-283 adopt a coiled-coil conformation.

This sequence belongs to the tropomyosin family. As to quaternary structure, homodimer.

Tropomyosin, in association with the troponin complex, plays a central role in the calcium dependent regulation of muscle contraction. The polypeptide is Tropomyosin (Locusta migratoria (Migratory locust)).